A 298-amino-acid polypeptide reads, in one-letter code: Ethanolamine ammonia-lyase small subunit (298 aa).

The tract at residues 1-19 (MDQKQIEEIVRSVMASMGQ) is targets protein to the BMC. Residues Val-210, Glu-231, and Cys-261 each contribute to the adenosylcob(III)alamin site.

The protein belongs to the EutC family. In terms of assembly, the basic unit is a heterodimer which dimerizes to form tetramers. The heterotetramers trimerize; 6 large subunits form a core ring with 6 small subunits projecting outwards. Interacts with EutS, which targets it to the interior of the BMC. Adenosylcob(III)alamin is required as a cofactor.

It is found in the bacterial microcompartment. The catalysed reaction is ethanolamine = acetaldehyde + NH4(+). It participates in amine and polyamine degradation; ethanolamine degradation. Functionally, catalyzes the deamination of various vicinal amino-alcohols to oxo compounds. It is spontaneously inactivated by its substrate and reactivated by EutA. May play a role in bacterial microcompartment (BMC) assembly or maintenance. Directly targeted to the BMC. Expression of the eut operon allows this bacteria to use ethanolamine (EA) as a carbon, nitrogen and energy source. It relies on cobalamin (vitamin B12) both as a cofactor for the ethanolamine ammonia-lyase activity and to induce the operon. EA enhances bacterial survival in macrophages in a concentration-dependent manner, suggesting it is an important nutrient during infection. This Salmonella typhimurium (strain LT2 / SGSC1412 / ATCC 700720) protein is Ethanolamine ammonia-lyase small subunit.